The chain runs to 379 residues: 8-amino-7-oxononanoate synthase (379 aa).

Substrate is bound by residues Arg27 and Arg34. 114–115 (GY) lines the pyridoxal 5'-phosphate pocket. His139 lines the substrate pocket. Residues Ser187, 212–215 (DDAH), and 232–235 (TLSK) each bind pyridoxal 5'-phosphate. Lys235 carries the post-translational modification N6-(pyridoxal phosphate)lysine. Thr344 provides a ligand contact to substrate.

It belongs to the class-II pyridoxal-phosphate-dependent aminotransferase family. BioF subfamily. In terms of assembly, homodimer. Pyridoxal 5'-phosphate serves as cofactor.

The enzyme catalyses 6-carboxyhexanoyl-[ACP] + L-alanine + H(+) = (8S)-8-amino-7-oxononanoate + holo-[ACP] + CO2. It participates in cofactor biosynthesis; biotin biosynthesis. In terms of biological role, catalyzes the decarboxylative condensation of pimeloyl-[acyl-carrier protein] and L-alanine to produce 8-amino-7-oxononanoate (AON), [acyl-carrier protein], and carbon dioxide. The polypeptide is 8-amino-7-oxononanoate synthase (Methylobacterium nodulans (strain LMG 21967 / CNCM I-2342 / ORS 2060)).